A 234-amino-acid chain; its full sequence is CKLF-like MARVEL transmembrane domain-containing protein 4 (234 aa).

Residues 1–11 (MRSGEELDGFE) show a composition bias toward acidic residues. Positions 1–38 (MRSGEELDGFEGEASSTSMISGASSPYQPTTEPVSQRR) are disordered. The segment covering 15–25 (SSTSMISGASS) has biased composition (low complexity). Positions 49-176 (YLRGALGRLK…NTFLAVQKWR (128 aa)) constitute an MARVEL domain. Helical transmembrane passes span 59-79 (VAQV…MACS), 85-105 (YFFE…LIMF), 123-143 (LVNT…LAAL), and 151-171 (IAAV…TFLA). At S194 the chain carries Phosphoserine.

Belongs to the chemokine-like factor family. In terms of assembly, interacts with PD-L1/CD274 and CMTM6. As to expression, highly expressed in testis and prostate.

It is found in the membrane. Functionally, acts as a backup for CMTM6 to regulate plasma membrane expression of PD-L1/CD274, an immune inhibitory ligand critical for immune tolerance to self and antitumor immunity. May protect PD-L1/CD274 from being polyubiquitinated and targeted for degradation. The chain is CKLF-like MARVEL transmembrane domain-containing protein 4 from Homo sapiens (Human).